The following is a 65-amino-acid chain: Prokaryotic ubiquitin-like protein Pup (65 aa).

The segment covering 1-14 (MSGHEQQRPSRREE) has biased composition (basic and acidic residues). The tract at residues 1-35 (MSGHEQQRPSRREEDVEETPVVPAQAGAQAKESDA) is disordered. An ARC ATPase binding region spans residues 21–59 (VVPAQAGAQAKESDADVDALLDEIDEVLESNSEEFVRGF). The stretch at 26–49 (AGAQAKESDADVDALLDEIDEVLE) forms a coiled coil. Glutamine 65 is subject to Deamidated glutamine. Glutamine 65 is covalently cross-linked (Isoglutamyl lysine isopeptide (Gln-Lys) (interchain with K-? in acceptor proteins)).

This sequence belongs to the prokaryotic ubiquitin-like protein family. Strongly interacts with the proteasome-associated ATPase ARC through a hydrophobic interface; the interacting region of Pup lies in its C-terminal half. There is one Pup binding site per ARC hexamer ring. In terms of processing, is modified by deamidation of its C-terminal glutamine to glutamate by the deamidase Dop, a prerequisite to the subsequent pupylation process.

It functions in the pathway protein degradation; proteasomal Pup-dependent pathway. Protein modifier that is covalently attached to lysine residues of substrate proteins, thereby targeting them for proteasomal degradation. The tagging system is termed pupylation. The sequence is that of Prokaryotic ubiquitin-like protein Pup from Kineococcus radiotolerans (strain ATCC BAA-149 / DSM 14245 / SRS30216).